Consider the following 140-residue polypeptide: Holo-[acyl-carrier-protein] synthase (140 aa).

Positions 8 and 62 each coordinate Mg(2+).

It belongs to the P-Pant transferase superfamily. AcpS family. Mg(2+) is required as a cofactor.

Its subcellular location is the cytoplasm. It carries out the reaction apo-[ACP] + CoA = holo-[ACP] + adenosine 3',5'-bisphosphate + H(+). Functionally, transfers the 4'-phosphopantetheine moiety from coenzyme A to a Ser of acyl-carrier-protein. The sequence is that of Holo-[acyl-carrier-protein] synthase from Cupriavidus pinatubonensis (strain JMP 134 / LMG 1197) (Cupriavidus necator (strain JMP 134)).